Consider the following 2662-residue polypeptide: Centrosome-associated protein CEP250L1 (2662 aa).

Coiled-coil stretches lie at residues K1030 to E1248 and A1281 to Q1719.

The protein resides in the cytoplasm. It is found in the cytoskeleton. It localises to the microtubule organizing center. The protein localises to the centrosome. Part of the centrosome inner core complex. Plays a role in the formation and/or stabilization of the mitotic spindle. Required for proper nuclear segregation and DNA partitioning during cell division. The sequence is that of Centrosome-associated protein CEP250L1 from Toxoplasma gondii (strain ATCC 50611 / Me49).